A 410-amino-acid polypeptide reads, in one-letter code: Argininosuccinate synthase (410 aa).

6–14 contributes to the ATP binding site; it reads AYSGGLDTS. Y84 is an L-citrulline binding site. G114 serves as a coordination point for ATP. T116, N120, and D121 together coordinate L-aspartate. N120 provides a ligand contact to L-citrulline. 5 residues coordinate L-citrulline: R124, S169, S178, E254, and Y266.

It belongs to the argininosuccinate synthase family. Type 1 subfamily. Homotetramer.

The protein localises to the cytoplasm. It catalyses the reaction L-citrulline + L-aspartate + ATP = 2-(N(omega)-L-arginino)succinate + AMP + diphosphate + H(+). The protein operates within amino-acid biosynthesis; L-arginine biosynthesis; L-arginine from L-ornithine and carbamoyl phosphate: step 2/3. The chain is Argininosuccinate synthase from Pyrococcus furiosus (strain ATCC 43587 / DSM 3638 / JCM 8422 / Vc1).